Reading from the N-terminus, the 448-residue chain is Glutamyl-tRNA reductase 2 (448 aa).

Residues 50 to 53 (TCER), S109, 114 to 116 (ESD), and Q120 each bind substrate. The Nucleophile role is filled by C51. An NADP(+)-binding site is contributed by 190–195 (GTGQVA). Residues 423 to 448 (DQAVPAYSPQPIGNTSNAAASATPRR) are disordered. Residues 433–442 (PIGNTSNAAA) are compositionally biased toward polar residues.

It belongs to the glutamyl-tRNA reductase family. Homodimer.

It catalyses the reaction (S)-4-amino-5-oxopentanoate + tRNA(Glu) + NADP(+) = L-glutamyl-tRNA(Glu) + NADPH + H(+). It participates in porphyrin-containing compound metabolism; protoporphyrin-IX biosynthesis; 5-aminolevulinate from L-glutamyl-tRNA(Glu): step 1/2. Its function is as follows. Catalyzes the NADPH-dependent reduction of glutamyl-tRNA(Glu) to glutamate 1-semialdehyde (GSA). The protein is Glutamyl-tRNA reductase 2 of Nocardioides sp. (strain ATCC BAA-499 / JS614).